The sequence spans 247 residues: Mitochondrial inner membrane protease ATP23 (247 aa).

Residues 1–21 (MSVPPPPKEDLIKPNPPKSES) form a disordered region. His-144 provides a ligand contact to a divalent metal cation. Glu-145 is an active-site residue. His-148 contributes to the a divalent metal cation binding site.

It belongs to the peptidase M76 family.

The protein localises to the mitochondrion inner membrane. Functionally, has a dual role in the assembly of mitochondrial ATPase. Acts as a protease that removes N-terminal residues of mitochondrial ATPase CF(0) subunit 6 at the intermembrane space side. Also involved in the correct assembly of the membrane-embedded ATPase CF(0) particle, probably mediating association of subunit 6 with the subunit 9 ring. The sequence is that of Mitochondrial inner membrane protease ATP23 (ATP23) from Kluyveromyces lactis (strain ATCC 8585 / CBS 2359 / DSM 70799 / NBRC 1267 / NRRL Y-1140 / WM37) (Yeast).